A 441-amino-acid polypeptide reads, in one-letter code: Amino-acid acetyltransferase (441 aa).

Residues 295–434 form the N-acetyltransferase domain; that stretch reads EQIRRANIND…QALYNYQRRS (140 aa).

Belongs to the acetyltransferase family. ArgA subfamily. Homohexamer.

The protein localises to the cytoplasm. It catalyses the reaction L-glutamate + acetyl-CoA = N-acetyl-L-glutamate + CoA + H(+). The protein operates within amino-acid biosynthesis; L-arginine biosynthesis; N(2)-acetyl-L-ornithine from L-glutamate: step 1/4. This chain is Amino-acid acetyltransferase, found in Edwardsiella ictaluri (strain 93-146).